The chain runs to 81 residues: Cell division protein ZapB (81 aa).

Residues 5–81 (LEVFEKLESK…QALLGRMEEV (77 aa)) are a coiled coil. Positions 43–64 (VQSAQHGREELERENSQLKEQQ) are disordered. A compositionally biased stretch (basic and acidic residues) spans 48 to 59 (HGREELERENSQ).

It belongs to the ZapB family. Homodimer. The ends of the coiled-coil dimer bind to each other, forming polymers. Interacts with FtsZ.

The protein localises to the cytoplasm. Functionally, non-essential, abundant cell division factor that is required for proper Z-ring formation. It is recruited early to the divisome by direct interaction with FtsZ, stimulating Z-ring assembly and thereby promoting cell division earlier in the cell cycle. Its recruitment to the Z-ring requires functional FtsA or ZipA. The chain is Cell division protein ZapB from Klebsiella pneumoniae subsp. pneumoniae (strain ATCC 700721 / MGH 78578).